Reading from the N-terminus, the 146-residue chain is Small ribosomal subunit protein uS15 (146 aa).

The protein belongs to the universal ribosomal protein uS15 family. As to quaternary structure, part of the 30S ribosomal subunit.

The protein is Small ribosomal subunit protein uS15 of Picrophilus torridus (strain ATCC 700027 / DSM 9790 / JCM 10055 / NBRC 100828 / KAW 2/3).